Consider the following 430-residue polypeptide: Adenylosuccinate synthetase (430 aa).

Residues 12 to 18 (GDEGKGK) and 40 to 42 (GHT) contribute to the GTP site. The Proton acceptor role is filled by Asp-13. Residues Asp-13 and Gly-40 each coordinate Mg(2+). IMP is bound by residues 13 to 16 (DEGK), 38 to 41 (NAGH), Thr-129, Arg-143, Gln-224, Thr-239, and Arg-303. Residue His-41 is the Proton donor of the active site. Position 299-305 (299-305 (ATTGRRR)) interacts with substrate. GTP-binding positions include Arg-305, 331–333 (KLD), and 413–415 (SVG).

This sequence belongs to the adenylosuccinate synthetase family. As to quaternary structure, homodimer. Mg(2+) is required as a cofactor.

Its subcellular location is the cytoplasm. The enzyme catalyses IMP + L-aspartate + GTP = N(6)-(1,2-dicarboxyethyl)-AMP + GDP + phosphate + 2 H(+). Its pathway is purine metabolism; AMP biosynthesis via de novo pathway; AMP from IMP: step 1/2. Its function is as follows. Plays an important role in the de novo pathway of purine nucleotide biosynthesis. Catalyzes the first committed step in the biosynthesis of AMP from IMP. In Desulfatibacillum aliphaticivorans, this protein is Adenylosuccinate synthetase.